A 350-amino-acid polypeptide reads, in one-letter code: 5'-tyrosyl-DNA phosphodiesterase (350 aa).

The interval 113-117 (NIDGL) is interaction with 5' end of substrate DNA. 2 residues coordinate Mg(2+): aspartate 115 and glutamate 145. The tract at residues 219-224 (HLESMR) is interaction with 5' end of substrate DNA. Catalysis depends on aspartate 258, which acts as the Proton donor/acceptor. The segment at 260–262 (NLR) is interaction with 5' end of substrate DNA.

The protein belongs to the CCR4/nocturin family. TTRAP/TDP2 subfamily. It depends on Mg(2+) as a cofactor. Mn(2+) serves as cofactor.

It is found in the nucleus. Its subcellular location is the PML body. DNA repair enzyme that can remove a variety of covalent adducts from DNA through hydrolysis of a 5'-phosphodiester bond, giving rise to DNA with a free 5' phosphate. Catalyzes the hydrolysis of dead-end complexes between DNA and the topoisomerase 2 (top2) active site tyrosine residue. Hydrolyzes 5'-phosphoglycolates on protruding 5' ends on DNA double-strand breaks (DSBs) due to DNA damage by radiation and free radicals. The chain is 5'-tyrosyl-DNA phosphodiesterase from Caenorhabditis briggsae.